We begin with the raw amino-acid sequence, 86 residues long: UPF0457 protein SERP1772 (86 aa).

This sequence belongs to the UPF0457 family.

This Staphylococcus epidermidis (strain ATCC 35984 / DSM 28319 / BCRC 17069 / CCUG 31568 / BM 3577 / RP62A) protein is UPF0457 protein SERP1772.